We begin with the raw amino-acid sequence, 776 residues long: DNA ligase (776 aa).

Residues 31–35, 80–81, and Glu-112 contribute to the NAD(+) site; these read DAEYD and SL. Catalysis depends on Lys-114, which acts as the N6-AMP-lysine intermediate. Residues Arg-135, Glu-172, Lys-288, and Lys-312 each contribute to the NAD(+) site. Positions 406, 409, 436, and 442 each coordinate Zn(2+). Positions 693 to 776 constitute a BRCT domain; sequence AEGLPLAGQT…TFLAEQGIAV (84 aa).

It belongs to the NAD-dependent DNA ligase family. LigA subfamily. Mg(2+) serves as cofactor. The cofactor is Mn(2+).

The enzyme catalyses NAD(+) + (deoxyribonucleotide)n-3'-hydroxyl + 5'-phospho-(deoxyribonucleotide)m = (deoxyribonucleotide)n+m + AMP + beta-nicotinamide D-nucleotide.. Functionally, DNA ligase that catalyzes the formation of phosphodiester linkages between 5'-phosphoryl and 3'-hydroxyl groups in double-stranded DNA using NAD as a coenzyme and as the energy source for the reaction. It is essential for DNA replication and repair of damaged DNA. This is DNA ligase from Pseudomonas putida (strain ATCC 47054 / DSM 6125 / CFBP 8728 / NCIMB 11950 / KT2440).